Here is a 104-residue protein sequence, read N- to C-terminus: Large ribosomal subunit protein uL24 (104 aa).

The protein belongs to the universal ribosomal protein uL24 family. Part of the 50S ribosomal subunit.

Its function is as follows. One of two assembly initiator proteins, it binds directly to the 5'-end of the 23S rRNA, where it nucleates assembly of the 50S subunit. One of the proteins that surrounds the polypeptide exit tunnel on the outside of the subunit. The sequence is that of Large ribosomal subunit protein uL24 from Shigella flexneri.